Here is a 134-residue protein sequence, read N- to C-terminus: Transcription antitermination protein NusB (134 aa).

The protein belongs to the NusB family.

Its function is as follows. Involved in transcription antitermination. Required for transcription of ribosomal RNA (rRNA) genes. Binds specifically to the boxA antiterminator sequence of the ribosomal RNA (rrn) operons. In Shewanella loihica (strain ATCC BAA-1088 / PV-4), this protein is Transcription antitermination protein NusB.